The following is a 183-amino-acid chain: UPF0398 protein LSL_0930 (183 aa).

Belongs to the UPF0398 family.

This Ligilactobacillus salivarius (strain UCC118) (Lactobacillus salivarius) protein is UPF0398 protein LSL_0930.